The primary structure comprises 420 residues: Serine hydroxymethyltransferase (420 aa).

(6S)-5,6,7,8-tetrahydrofolate contacts are provided by residues Leu121 and 125-127; that span reads GHL. An N6-(pyridoxal phosphate)lysine modification is found at Lys230. Residues Glu246 and 354–356 each bind (6S)-5,6,7,8-tetrahydrofolate; that span reads SPF.

This sequence belongs to the SHMT family. As to quaternary structure, homodimer. Pyridoxal 5'-phosphate serves as cofactor.

It is found in the cytoplasm. It catalyses the reaction (6R)-5,10-methylene-5,6,7,8-tetrahydrofolate + glycine + H2O = (6S)-5,6,7,8-tetrahydrofolate + L-serine. The protein operates within one-carbon metabolism; tetrahydrofolate interconversion. It participates in amino-acid biosynthesis; glycine biosynthesis; glycine from L-serine: step 1/1. Catalyzes the reversible interconversion of serine and glycine with tetrahydrofolate (THF) serving as the one-carbon carrier. This reaction serves as the major source of one-carbon groups required for the biosynthesis of purines, thymidylate, methionine, and other important biomolecules. Also exhibits THF-independent aldolase activity toward beta-hydroxyamino acids, producing glycine and aldehydes, via a retro-aldol mechanism. In Rickettsia peacockii (strain Rustic), this protein is Serine hydroxymethyltransferase.